A 99-amino-acid chain; its full sequence is Small ribosomal subunit protein bS20 (99 aa).

Over residues 1-20 (MASAKPKKKNPRLASGRKRA) the composition is skewed to basic residues. The interval 1 to 29 (MASAKPKKKNPRLASGRKRARQDVKLNAA) is disordered.

It belongs to the bacterial ribosomal protein bS20 family.

Functionally, binds directly to 16S ribosomal RNA. The polypeptide is Small ribosomal subunit protein bS20 (Paracidovorax citrulli (strain AAC00-1) (Acidovorax citrulli)).